The chain runs to 324 residues: Beta-ketoacyl-[acyl-carrier-protein] synthase III (324 aa).

Active-site residues include C112 and H251. The ACP-binding stretch occupies residues 252–256; that stretch reads QANIR. N281 is a catalytic residue.

The protein belongs to the thiolase-like superfamily. FabH family. As to quaternary structure, homodimer.

The protein localises to the cytoplasm. The catalysed reaction is malonyl-[ACP] + acetyl-CoA + H(+) = 3-oxobutanoyl-[ACP] + CO2 + CoA. The protein operates within lipid metabolism; fatty acid biosynthesis. Its function is as follows. Catalyzes the condensation reaction of fatty acid synthesis by the addition to an acyl acceptor of two carbons from malonyl-ACP. Catalyzes the first condensation reaction which initiates fatty acid synthesis and may therefore play a role in governing the total rate of fatty acid production. Possesses both acetoacetyl-ACP synthase and acetyl transacylase activities. Its substrate specificity determines the biosynthesis of branched-chain and/or straight-chain of fatty acids. This Desulfotalea psychrophila (strain LSv54 / DSM 12343) protein is Beta-ketoacyl-[acyl-carrier-protein] synthase III.